Reading from the N-terminus, the 313-residue chain is Protein phosphatase PTC7 homolog fig (313 aa).

One can recognise a PPM-type phosphatase domain in the interval 47-307 (KEPLTDLQLR…DDITVILASL (261 aa)). D83, G84, and D229 together coordinate Mn(2+).

The protein belongs to the PP2C family. The cofactor is Mg(2+). Requires Mn(2+) as cofactor.

It carries out the reaction O-phospho-L-seryl-[protein] + H2O = L-seryl-[protein] + phosphate. It catalyses the reaction O-phospho-L-threonyl-[protein] + H2O = L-threonyl-[protein] + phosphate. This Drosophila virilis (Fruit fly) protein is Protein phosphatase PTC7 homolog fig.